We begin with the raw amino-acid sequence, 220 residues long: Protein LURP-one-related 12 (220 aa).

This sequence belongs to the LOR family.

Functionally, might be related to the phospholipid scramblase and tubby-like superfamily of membrane tethered transcription factors. The protein is Protein LURP-one-related 12 of Arabidopsis thaliana (Mouse-ear cress).